The primary structure comprises 258 residues: 5'-nucleotidase SurE (258 aa).

A divalent metal cation is bound by residues D14, D15, S45, and N101.

This sequence belongs to the SurE nucleotidase family. The cofactor is a divalent metal cation.

It localises to the cytoplasm. It catalyses the reaction a ribonucleoside 5'-phosphate + H2O = a ribonucleoside + phosphate. Its function is as follows. Nucleotidase that shows phosphatase activity on nucleoside 5'-monophosphates. This Chlorobium phaeobacteroides (strain DSM 266 / SMG 266 / 2430) protein is 5'-nucleotidase SurE.